A 135-amino-acid polypeptide reads, in one-letter code: DNA-binding protein H-NS homolog (135 aa).

The DNA-binding element occupies 112-117 (QGRTPS).

It belongs to the histone-like protein H-NS family. Homodimer that oligomerizes on DNA into higher-order complexes that form bridges between disparate regions of DNA compacting it.

Its subcellular location is the cytoplasm. The protein resides in the nucleoid. Its function is as follows. A DNA-binding protein implicated in transcriptional repression and chromosome organization and compaction. Binds nucleation sites in AT-rich DNA and bridges them, forming higher-order nucleoprotein complexes and condensing the chromosome. A subset of genes are repressed by H-NS in association with other proteins. The sequence is that of DNA-binding protein H-NS homolog (hns) from Buchnera aphidicola subsp. Acyrthosiphon pisum (strain APS) (Acyrthosiphon pisum symbiotic bacterium).